We begin with the raw amino-acid sequence, 362 residues long: Protein RecA (362 aa).

Position 77-84 (77-84) interacts with ATP; it reads GPESSGKT.

The protein belongs to the RecA family.

The protein resides in the cytoplasm. Its function is as follows. Can catalyze the hydrolysis of ATP in the presence of single-stranded DNA, the ATP-dependent uptake of single-stranded DNA by duplex DNA, and the ATP-dependent hybridization of homologous single-stranded DNAs. It interacts with LexA causing its activation and leading to its autocatalytic cleavage. This is Protein RecA from Allorhizobium ampelinum (strain ATCC BAA-846 / DSM 112012 / S4) (Agrobacterium vitis (strain S4)).